Reading from the N-terminus, the 504-residue chain is Bacterial leucyl aminopeptidase (504 aa).

The N-terminal stretch at 1 to 21 (MKYTKTLLAMVLSATFCQAYA) is a signal peptide. A propeptide spanning residues 22–106 (EDKVWISIGA…AMPTTLASFV (85 aa)) is cleaved from the precursor. Positions 203, 223, 258, and 285 each coordinate Zn(2+). Cysteines 329 and 333 form a disulfide. His-362 serves as a coordination point for Zn(2+). A propeptide spans 406 to 504 (LEDGVPVTDL…SGASLKASTF (99 aa)) (removed in mature form).

This sequence belongs to the peptidase M28 family. M28E subfamily. Zn(2+) is required as a cofactor.

It localises to the secreted. The enzyme catalyses Release of an N-terminal amino acid, preferentially leucine, but not glutamic or aspartic acids.. This chain is Bacterial leucyl aminopeptidase, found in Vibrio proteolyticus (Aeromonas proteolytica).